Here is a 500-residue protein sequence, read N- to C-terminus: Cytochrome P450 monooxygenase astJ (500 aa).

Heme is bound at residue Cys440.

The protein belongs to the cytochrome P450 family. Requires heme as cofactor.

Its pathway is secondary metabolite biosynthesis; terpenoid biosynthesis. Cytochrome P450 monooxygenase; part of the gene cluster that mediates the biosynthesis of astellolides, drimane-type sesquiterpene esters that show antimicrobial, anti-inflammatory, and anti-tumor activities. The first step in astellolide biosynthesis is performed by the sesquiterpene cyclase astC that catalyzes the formation of drimanyl pyrophosphate from farnesyl pyrophosphate. Drimanyl pyrophosphate is then dephosphorylated by the sesquiterpene phosphatase astI to produce drimanyl monophosphate which is further dephosphorylated to drim-8-ene-11-ol by atsK. Drim-8-ene-11-ol is converted to confertifolin, probably by the cytochrome P450 monooxygenase astD and/or the dehydrogenase astE. The cytochrome P450 monooxygenases astB, astF and astJ then hydroxylate confertifolin at C6, C14, or C15 to form trihydroxy confertifolin. The nonribosomal peptide synthetase astA catalyzes ester bond formation between trihydroxy contifolin and benzoic acid (BA) or 4-hydroxy benzoic acid (4HBA), leading to the formation of dideacetyl astellolides A and B, respectively. Finally, the O-acetyltransferase astG converts dideacetyl astellolides A and B into deacetyl astellolides A and B. The sequence is that of Cytochrome P450 monooxygenase astJ from Aspergillus oryzae (strain ATCC 42149 / RIB 40) (Yellow koji mold).